Reading from the N-terminus, the 251-residue chain is Probable transcriptional regulatory protein CT1665 (251 aa).

Belongs to the TACO1 family.

It localises to the cytoplasm. This Chlorobaculum tepidum (strain ATCC 49652 / DSM 12025 / NBRC 103806 / TLS) (Chlorobium tepidum) protein is Probable transcriptional regulatory protein CT1665.